Here is a 369-residue protein sequence, read N- to C-terminus: NAD-dependent epimerase/dehydratase FUM13 (369 aa).

Position 176 (Tyr176) interacts with NADP(+).

This sequence belongs to the NAD(P)-dependent epimerase/dehydratase family. Dihydroflavonol-4-reductase subfamily.

The protein operates within mycotoxin biosynthesis. In terms of biological role, NAD-dependent epimerase/dehydratase; part of the gene cluster that mediates the biosynthesis of fumonisins B1 (FB1), B2 (FB2), B3 (FB3), and B4 (FB4), which are carcinogenic mycotoxins. Within the pathway, FUM13 stereospecifically reduces the intermediate 3-keto intermediate 2-amino-3-oxo-12,16-dimethylicosane to the 3-hydroxyl product 2-amino-3-hydroxy-12,16-dimethylicosane. The biosynthesis starts with the FUM1-catalyzed carbon chain assembly from one molecule of acetyl-CoA, eight molecules of malonyl-CoA, and two molecules of methionine (in S-adenosyl form). The C18 polyketide chain is released from the enzyme by a nucleophilic attack of a carbanion, which is derived from R-carbon of alanine by decarboxylation, on the carbonyl carbon of polyketide acyl chain. This step is catalyzed by the pyridoxal 5'-phosphate-dependent aminoacyl transferase FUM8. The resultant 3-keto intermediate is then stereospecifically reduced to a 3-hydroxyl product by reductase FUM13. Subsequent oxidations at C-10 by the cytochrome P450 monooxygenase FUM2, C-14 and C-15 by FUM6, FUM12 or FUM15, tricarballylic esterification of the hydroxyl groups on C-14 and C-15 by acyltransferase FUM14, and C-5 hydroxylation by 2-keto-glutarate-dependent dioxygenase FUM3 furnish the biosynthesis of fumonisins. The tricarballylic moieties are most likely derived from the citric acid cycle, and their addition to the carbon backbone may involve FUM7, FUM10, FUM11 and FUM14. This chain is NAD-dependent epimerase/dehydratase FUM13, found in Gibberella moniliformis (strain M3125 / FGSC 7600) (Maize ear and stalk rot fungus).